The chain runs to 203 residues: Urease accessory protein UreG (203 aa).

11 to 18 contributes to the GTP binding site; the sequence is GPVGSGKT.

The protein belongs to the SIMIBI class G3E GTPase family. UreG subfamily. In terms of assembly, homodimer. UreD, UreF and UreG form a complex that acts as a GTP-hydrolysis-dependent molecular chaperone, activating the urease apoprotein by helping to assemble the nickel containing metallocenter of UreC. The UreE protein probably delivers the nickel.

It localises to the cytoplasm. In terms of biological role, facilitates the functional incorporation of the urease nickel metallocenter. This process requires GTP hydrolysis, probably effectuated by UreG. This is Urease accessory protein UreG from Prochlorococcus marinus (strain AS9601).